We begin with the raw amino-acid sequence, 472 residues long: NALCN channel auxiliary factor 2 (472 aa).

Residues 47-67 traverse the membrane as a helical segment; that stretch reads LASLLFFTVLLADHLWLCAGA. A disordered region spans residues 77–114; it reads AMRPPWGAGRERQPVPPRAVLPLPPPPPGEPSAPPGTC. The span at 90 to 110 shows a compositional bias: pro residues; that stretch reads PVPPRAVLPLPPPPPGEPSAP. 2 N-linked (GlcNAc...) asparagine glycosylation sites follow: Asn120 and Asn193. Residues 433–453 traverse the membrane as a helical segment; it reads LCVLVLMLLHTVVSFSSNQGG.

Belongs to the NALF family.

Its subcellular location is the membrane. Its function is as follows. Probable component of the NALCN channel complex, a channel that regulates the resting membrane potential and controls neuronal excitability. In Homo sapiens (Human), this protein is NALCN channel auxiliary factor 2.